A 1076-amino-acid polypeptide reads, in one-letter code: MKSPLLGLVVWSLLLQLLQPGLAFWNSQISQNCHNGSYEITVLMMNNYAFQESLESLKTAVNKGLDIVKQRLQEAALYVTVNATFIHSDGLIHKSGDCRSSTCEGLDLLREIARQKRMGCALMGPSCTYSTYQMYLDTELNYPMISAGSFGLSCDHKETLTRMMSPARKLMYFLVDFWKASNLPFKSFSWNTSYVFKNGTESEHCFWYINALEAGVSYFSQVLGFKEMLRGNEELQKILKDPNRRSNVIVMCGTPQTMESLKIDWTATEDTVIILVDLFNNYYLEENATAPDYMKNVLVLTLPPGNSTINTSLSKESLQEFSDFALAYLDGILLFGHMLKTFLRNGENTTAHKFAHAFRNLTFEGSTGPVTLDDSGDIDNTMVLLYTSVDTKKFKPLLFYDTRINQTTPIDTHPTFIWKNHRLPHDIPGLGPHILLIAVCTLAGVVVLILLIALLVLRKYKKDNELRQKKWSHIPPEKILPLETNEANHVSLKIDDDKKRDTVQRLRQCKYDPKRAILKDLKYSDGNFSEKQKIELDKLLPSDFYSLTKFYGTVKLDTRIFGVIEYCERGSLREVLNETISYPDGTIMGWEFKISVLYDIAKGMSYLHSSKIEVHGRLKSTNCVVDSRMVVKITDFGYNSILPPKKDLWTAPEHLRQASTSQKGDVYSFGIIAQEIIMRRETFYTLSCRDQKEKIFRVEHPDGLKPFRPDLFLETAEEKELEVFLLVKNCWEEDPEKRPDFKKIENTLAKIFGLFHDQKNESYMDTLIRRLQLYSRNLEHLVEERTQLYKAERDRADRLNFMLLPRPVVQSLKEKGIVEPELYEEVTVYFSDIVGFTTICKYSTPMEVVDMLNDLYKSFDQIVDHHDVHKVETIGDAYVVASGLPTRNGNRHAIDISKMALDILSFIGTFELEHLPGLPVWIRIGVHSGPCAAGVVGIKIPRYCLFGDTVNTASRMESTGLPLRIHMSSSTIAILKRVQCQFLYEMRGETYLKGKGTETTYCLTGMKDQEYNLPTPPTVENQQRLQAEFSDMITNSLQKRQATGIKSRKPARVASYKKGTLEYLQLNTTDQDSTYF.

The N-terminal stretch at 1–23 (MKSPLLGLVVWSLLLQLLQPGLA) is a signal peptide. The Extracellular portion of the chain corresponds to 24–433 (FWNSQISQNC…PHDIPGLGPH (410 aa)). Residues Asn-35, Asn-82, Asn-191, Asn-198, Asn-287, Asn-306, Asn-310, Asn-348, and Asn-405 are each glycosylated (N-linked (GlcNAc...) asparagine). The chain crosses the membrane as a helical span at residues 434-457 (ILLIAVCTLAGVVVLILLIALLVL). Residues 458–1076 (RKYKKDNELR…NTTDQDSTYF (619 aa)) are Cytoplasmic-facing. Residues 492–752 (LKIDDDKKRD…KIENTLAKIF (261 aa)) form the Protein kinase domain. The region spanning 827-957 (TVYFSDIVGF…DTVNTASRME (131 aa)) is the Guanylate cyclase domain.

This sequence belongs to the adenylyl cyclase class-4/guanylyl cyclase family. In terms of assembly, homotrimer. Interacts via its C-terminal region with NHERF4. Interacts with the lectin chaperone VIP36. Glycosylation at Asn-62 is required for interaction with VIP36 while glycosylation at Asn-348 and Asn-405 modulates ligand-mediated GC-C activation.

Its subcellular location is the cell membrane. The protein resides in the endoplasmic reticulum membrane. It catalyses the reaction GTP = 3',5'-cyclic GMP + diphosphate. In terms of biological role, guanylyl cyclase that catalyzes synthesis of cyclic GMP (cGMP) from GTP. The polypeptide is Guanylyl cyclase C (GUCY2C) (Cavia porcellus (Guinea pig)).